Here is a 476-residue protein sequence, read N- to C-terminus: Ribulose bisphosphate carboxylase large chain (476 aa).

The propeptide occupies 1–2 (MS). P3 carries the N-acetylproline modification. Position 14 is an N6,N6,N6-trimethyllysine (K14). Residues N123 and T173 each contribute to the substrate site. The Proton acceptor role is filled by K175. K177 lines the substrate pocket. Residues K201, D203, and E204 each contribute to the Mg(2+) site. K201 carries the N6-carboxylysine modification. The active-site Proton acceptor is H294. Residues R295, H327, and S379 each coordinate substrate.

This sequence belongs to the RuBisCO large chain family. Type I subfamily. Heterohexadecamer of 8 large chains and 8 small chains; disulfide-linked. The disulfide link is formed within the large subunit homodimers. It depends on Mg(2+) as a cofactor. In terms of processing, the disulfide bond which can form in the large chain dimeric partners within the hexadecamer appears to be associated with oxidative stress and protein turnover.

Its subcellular location is the plastid. It is found in the chloroplast. It carries out the reaction 2 (2R)-3-phosphoglycerate + 2 H(+) = D-ribulose 1,5-bisphosphate + CO2 + H2O. The enzyme catalyses D-ribulose 1,5-bisphosphate + O2 = 2-phosphoglycolate + (2R)-3-phosphoglycerate + 2 H(+). Its function is as follows. RuBisCO catalyzes two reactions: the carboxylation of D-ribulose 1,5-bisphosphate, the primary event in carbon dioxide fixation, as well as the oxidative fragmentation of the pentose substrate in the photorespiration process. Both reactions occur simultaneously and in competition at the same active site. This Phaseolus vulgaris (Kidney bean) protein is Ribulose bisphosphate carboxylase large chain.